Reading from the N-terminus, the 278-residue chain is Tryptophan 2,3-dioxygenase (278 aa).

Substrate-binding positions include 47 to 51 (FIIQH), Tyr110, and Arg114. His236 is a binding site for heme. Thr250 lines the substrate pocket.

This sequence belongs to the tryptophan 2,3-dioxygenase family. Homotetramer. Heme serves as cofactor.

The catalysed reaction is L-tryptophan + O2 = N-formyl-L-kynurenine. It participates in amino-acid degradation; L-tryptophan degradation via kynurenine pathway; L-kynurenine from L-tryptophan: step 1/2. Functionally, heme-dependent dioxygenase that catalyzes the oxidative cleavage of the L-tryptophan (L-Trp) pyrrole ring and converts L-tryptophan to N-formyl-L-kynurenine. Catalyzes the oxidative cleavage of the indole moiety. The sequence is that of Tryptophan 2,3-dioxygenase from Ruegeria pomeroyi (strain ATCC 700808 / DSM 15171 / DSS-3) (Silicibacter pomeroyi).